Reading from the N-terminus, the 338-residue chain is Phenylalanine--tRNA ligase alpha subunit (338 aa).

E252 is a binding site for Mg(2+).

Belongs to the class-II aminoacyl-tRNA synthetase family. Phe-tRNA synthetase alpha subunit type 1 subfamily. As to quaternary structure, tetramer of two alpha and two beta subunits. Mg(2+) is required as a cofactor.

The protein localises to the cytoplasm. The catalysed reaction is tRNA(Phe) + L-phenylalanine + ATP = L-phenylalanyl-tRNA(Phe) + AMP + diphosphate + H(+). The sequence is that of Phenylalanine--tRNA ligase alpha subunit from Pseudomonas paraeruginosa (strain DSM 24068 / PA7) (Pseudomonas aeruginosa (strain PA7)).